We begin with the raw amino-acid sequence, 300 residues long: Phospholipase A1 (300 aa).

Cysteines 4 and 87 form a disulfide. Catalysis depends on Ser-137, which acts as the Nucleophile. Asp-165 (charge relay system) is an active-site residue. Disulfide bonds link Cys-176–Cys-181 and Cys-219–Cys-227. Catalysis depends on His-229, which acts as the Charge relay system. Disulfide bonds link Cys-244–Cys-268, Cys-245–Cys-293, and Cys-261–Cys-266.

The protein belongs to the AB hydrolase superfamily. Lipase family. In terms of tissue distribution, expressed by the venom gland.

It is found in the secreted. The catalysed reaction is a 1,2-diacyl-sn-glycero-3-phosphocholine + H2O = a 2-acyl-sn-glycero-3-phosphocholine + a fatty acid + H(+). Its function is as follows. Catalyzes the hydrolysis of phosphatidylcholine with phospholipase A1 activity. May act as an allergen and induce hemolytic activity. The chain is Phospholipase A1 from Vespula maculifrons (Eastern yellow jacket).